The chain runs to 553 residues: MTQVDTAPSNFIRNIIDSDLQSGKHQVIHTRFPPEPNGYLHIGHAKSICLNFGLAEDYPNALCNLRFDDTNPVKEDADYVAAIEKDVRWLGFKWAGDIHYSSDYFEQLYDFAIELIKKDKAYVCALDAQQTREYRGSLMTVGKDSPFRNRPISESLDLFARMRAGEFAEGSMMLRAKIDMASPNMKMRDPVLYRIRFAHHHQTGDKWCIYPMYDFTHCISDALEGITHSLCTLEFEDHRPLYDWVLANISIACKPRQIEFSRLNLQYTLTSKRKLHTLIEEKIISAWDDPRMPTISGMRRRGYPAASIREFCKRIGVTKQENTVELASLEACVRENLEANAPRAMAVIDPVKVIISNYDENKTEKLIAAIHPKDESMGTRTVTFSREIFIDRADFREEANKKYKRLVLGKEVRLRNAYVIKADQVIKNDAGEITEIHCSYDPETLGNNPTDGRKVKGVIHWVSAVENQAAEFRIYEPLFLVENPAAAENIDEVLNPNALVIKHGFVESGLSDALAEKAYQFEREGYFCADNKDSSPERLVFNRTVALRDSWGG.

Positions P34–H44 match the 'HIGH' region motif. ATP contacts are provided by residues E35–N37 and H41–S47. L-glutamine contacts are provided by D68 and Y213. ATP is bound by residues T232 and R262–L263. Positions L269–R273 match the 'KMSKS' region motif.

Belongs to the class-I aminoacyl-tRNA synthetase family. As to quaternary structure, monomer.

The protein resides in the cytoplasm. The catalysed reaction is tRNA(Gln) + L-glutamine + ATP = L-glutaminyl-tRNA(Gln) + AMP + diphosphate. In Psychromonas ingrahamii (strain DSM 17664 / CCUG 51855 / 37), this protein is Glutamine--tRNA ligase.